Here is a 466-residue protein sequence, read N- to C-terminus: Argininosuccinate lyase (466 aa).

This sequence belongs to the lyase 1 family. Argininosuccinate lyase subfamily.

It localises to the cytoplasm. It carries out the reaction 2-(N(omega)-L-arginino)succinate = fumarate + L-arginine. The protein operates within amino-acid biosynthesis; L-arginine biosynthesis; L-arginine from L-ornithine and carbamoyl phosphate: step 3/3. The chain is Argininosuccinate lyase from Synechococcus elongatus (strain ATCC 33912 / PCC 7942 / FACHB-805) (Anacystis nidulans R2).